A 316-amino-acid chain; its full sequence is Transcription initiation factor IIB (316 aa).

The TFIIB-type zinc-finger motif lies at 11–42; sequence PRVTCPNHPDAILVEDYRAGDMICPECGLVVG. Zn(2+) is bound by residues cysteine 15, histidine 18, cysteine 34, and cysteine 37. Serine 70, serine 76, and serine 92 each carry phosphoserine. Repeat copies occupy residues 124-200 and 218-294. Positions 152, 154, 189, and 196 each coordinate DNA. Positions 189 to 193 are core promoter DNA-binding; sequence KEIGR. Residue lysine 238 is modified to N6-acetyllysine; by autocatalysis. Residues 244–316 form a necessary for TATA box-bound TBP complex formation region; sequence LVPGRSPISV…DTPVDKLPQL (73 aa). Arginine 248 lines the DNA pocket. The interval 249–252 is core promoter DNA-binding; the sequence is SPIS. DNA-binding residues include lysine 272, alanine 281, threonine 284, arginine 286, and arginine 290. Residues 283–286 are core promoter DNA-binding; sequence VTIR.

Belongs to the TFIIB family. Found in a ternary complex with TATA box-bound TBP. Part of a TFIID-containing RNA polymerase II pre-initiation complex (PIC) that is composed of TBP and at least GTF2A1, GTF2A2, GTF2E1, GTF2E2, GTF2F1, GTF2H2, GTF2H3, GTF2H4, GTF2H5, GTF2B, TCEA1, ERCC2, ERCC3, TAF1, TAF2, TAF3, TAF4, TAF5, TAF6, TAF7, TAF8, TAF9, TAF10, TAF11, TAF12 and TAF13. Associates with TFIID-TFIIA (DA complex) to form TFIID-TFIIA-TFIIB (DAB complex), which is then recognized by RNA polymerase II (Pol II). Found in a RNA polymerase II initiation complex. Interacts (via C-terminus) with TBP; this interaction with TATA box-bound TBP guides Pol II into the PIC. Interacts (via N-terminus) with Pol II. Interacts (via C-terminus) with SSU72; this interaction is inhibited by SYMPK. Interacts with NR2F1; this interaction is direct. Interacts with PGR. Interacts with ESR1. Interacts with GTF2F1 (via C-terminus and preferentially via acetylated form); this interaction prevents binding of GTF2B to GTF2F2. Interacts with GTF2F2 (via N-terminus); this interaction is inhibited in presence of GTF2F1. Interacts with the transcription elongation factor TCEA2. Interacts with HSF1 (via transactivation domain). Interacts with GPBP1. Post-translationally, acetylated. Autoacetylated; autoacetylation at Lys-238 stimulates transcription activation.

It is found in the nucleus. The protein localises to the chromosome. It carries out the reaction L-lysyl-[protein] + acetyl-CoA = N(6)-acetyl-L-lysyl-[protein] + CoA + H(+). General transcription factor that plays a role in transcription initiation by RNA polymerase II (Pol II). Involved in the pre-initiation complex (PIC) formation and Pol II recruitment at promoter DNA. Together with the TATA box-bound TBP forms the core initiation complex and provides a bridge between TBP and the Pol II-TFIIF complex. Released from the PIC early following the onset of transcription during the initiation and elongation transition and reassociates with TBP during the next transcription cycle. Associates with chromatin to core promoter-specific regions. Binds to two distinct DNA core promoter consensus sequence elements in a TBP-independent manner; these IIB-recognition elements (BREs) are localized immediately upstream (BREu), 5'-[GC][GC][GA]CGCC-3', and downstream (BREd), 5'-[GA]T[TGA][TG][GT][TG][TG]-3', of the TATA box element. Modulates transcription start site selection. Also exhibits autoacetyltransferase activity that contributes to the activated transcription. The polypeptide is Transcription initiation factor IIB (Mus musculus (Mouse)).